The following is a 548-amino-acid chain: MERQSMALVGDKEEIIRKSFEYHPTVWGDYFIRNYSCLPLEKECMIKRVEELKDRVRNLFEETHDVLQIMILVDSIQLLGLDYHFEKEITAALRLIYEADVENYGLYEVSLRFRLLRQHGYNLSPDVFNKFKDDKGRFLPTLNGDAKGLLNLYNAAYLGTHEETILDEAISFTKCQLESLLGELEQPLAIEVSLFLETPLYRRTRRLLVRKYIPIYQEKVMRNDTILELAKLDFNLLQSLHQEEVKKITIWWNDLALTKSLKFARDRVVECYYWIVAVYFEPQYSRARVITSKAISLMSIMDDIYDNYSTLEESRLLTEAIERWEPQAVDCVPEYLKDFYLKLLKTYKDFEDELEPNEKYRIPYLQEEIKVLSRAYFQEAKWGVERYVPALEEHLLVSLITAGYFAVACASYVGLGEDATKETFEWVASSPKILKSCSIHCRLMDDITSHQREQERDHFASTVESYMKEHGTSAKVACEKLQVMVEQKWKDLNEECLRPTQVARPLIEIILNLSRAMEDIYKHKDTYTNSNTRMKDNVSLIFVESFLI.

Mg(2+)-binding residues include D302, D306, and E453. The DDXXD motif motif lies at 302 to 306 (DDIYD).

Belongs to the terpene synthase family. In terms of tissue distribution, mostly expressed in rhizomes.

It carries out the reaction (2E,6E)-farnesyl diphosphate = alpha-humulene + diphosphate. Catalyzes the formation of alpha-humulene in the first step of zerumbone biosynthesis, a highly promising multi-anticancer agent. Also mediates formation of beta-caryophyllene at a much lower level. The polypeptide is Alpha-humulene synthase (ZSS1) (Zingiber zerumbet (Shampoo ginger)).